We begin with the raw amino-acid sequence, 213 residues long: Probable transaldolase (213 aa).

Lys-83 (schiff-base intermediate with substrate) is an active-site residue.

Belongs to the transaldolase family. Type 3B subfamily.

The protein resides in the cytoplasm. It catalyses the reaction D-sedoheptulose 7-phosphate + D-glyceraldehyde 3-phosphate = D-erythrose 4-phosphate + beta-D-fructose 6-phosphate. It participates in carbohydrate degradation; pentose phosphate pathway; D-glyceraldehyde 3-phosphate and beta-D-fructose 6-phosphate from D-ribose 5-phosphate and D-xylulose 5-phosphate (non-oxidative stage): step 2/3. Functionally, transaldolase is important for the balance of metabolites in the pentose-phosphate pathway. The sequence is that of Probable transaldolase from Oceanobacillus iheyensis (strain DSM 14371 / CIP 107618 / JCM 11309 / KCTC 3954 / HTE831).